The following is an 89-amino-acid chain: Small ribosomal subunit protein uS15c (89 aa).

Belongs to the universal ribosomal protein uS15 family. In terms of assembly, part of the 30S ribosomal subunit.

It is found in the plastid. This chain is Small ribosomal subunit protein uS15c (rps15), found in Aneura mirabilis (Parasitic liverwort).